The following is a 267-amino-acid chain: Strigolactone esterase RMS3 (267 aa).

S96 serves as the catalytic Nucleophile. Catalysis depends on residues D218 and H247.

This sequence belongs to the AB hydrolase superfamily.

It localises to the cytoplasm. The protein resides in the nucleus. Functionally, involved in strigolactone signaling pathway. Functions downstream of strigolactone synthesis, as a component of hormone signaling and as an enzyme that participates in the conversion of strigolactones to the bioactive form. Binds and hydrolyzes the synthetic strigolactone analog GR24 and its enantiomers in vitro. Forms a stable covalent complex with the D-ring of strigolactone, which is essential for hormone bioactivity. The D-ring is attached to His-247 of the catalytic triad. The hydrolysis of strigolactone into a covalently linked intermediate molecule is required to trigger strigolactone signaling. This mechanism defines RMS3 as a non-canonical hormone receptor with dual functions to generate and sense the active form of strigolactone. Strigolactones are hormones that inhibit tillering and shoot branching through the MAX-dependent pathway, contribute to the regulation of shoot architectural response to phosphate-limiting conditions and function as rhizosphere signal that stimulates hyphal branching of arbuscular mycorrhizal fungi and trigger seed germination of root parasitic weeds. The chain is Strigolactone esterase RMS3 from Pisum sativum (Garden pea).